The chain runs to 71 residues: UPF0435 protein RBAM_008100 (71 aa).

This sequence belongs to the UPF0435 family.

This is UPF0435 protein RBAM_008100 from Bacillus velezensis (strain DSM 23117 / BGSC 10A6 / LMG 26770 / FZB42) (Bacillus amyloliquefaciens subsp. plantarum).